The chain runs to 36 residues: Hemoglobin subunit beta (36 aa).

The region spanning 1 to 36 is the Globin domain; the sequence is VCVLAHHFGKEFTPQVQAAYQKVVAGVANALAHKYH. Lys-34 is subject to N6-acetyllysine.

The protein belongs to the globin family. In terms of assembly, heterotetramer of two alpha chains and two beta chains. As to expression, red blood cells.

In terms of biological role, involved in oxygen transport from the lung to the various peripheral tissues. The chain is Hemoglobin subunit beta (HBB) from Pongo pygmaeus (Bornean orangutan).